The following is a 583-amino-acid chain: Trehalase (583 aa).

An N-terminal signal peptide occupies residues 1–23; it reads MPGRTWELCLLLLLGLGLGSQEA. N78 is a glycosylation site (N-linked (GlcNAc...) asparagine). Residues R168, 175–176, N212, and 221–223 contribute to the substrate site; these read WD and RSQ. 2 N-linked (GlcNAc...) asparagine glycosylation sites follow: N239 and N261. Residues 286–288 and G319 each bind substrate; that span reads RPE. D321 serves as the catalytic Proton donor/acceptor. N369 is a glycosylation site (N-linked (GlcNAc...) asparagine). The active-site Proton donor/acceptor is E514. E529 lines the substrate pocket. S556 carries GPI-anchor amidated serine lipidation. The propeptide at 557 to 583 is removed in mature form; the sequence is GAKLAFLEPHCLAATLLPSLLLSLLPW.

It belongs to the glycosyl hydrolase 37 family. As to quaternary structure, homodimer; disulfide-linked. Expressed in kidney, liver and small intestine. Also more weakly expressed in pancreas.

The protein resides in the cell membrane. The catalysed reaction is alpha,alpha-trehalose + H2O = alpha-D-glucose + beta-D-glucose. Functionally, intestinal trehalase is probably involved in the hydrolysis of ingested trehalose. The sequence is that of Trehalase from Homo sapiens (Human).